Here is a 490-residue protein sequence, read N- to C-terminus: Polyamine oxidase 2 (490 aa).

4 residues coordinate FAD: E57, R65, V246, and E433. The Microbody targeting signal signature appears at 488–490; it reads SRL.

The protein belongs to the flavin monoamine oxidase family. The cofactor is FAD. As to expression, highly expressed in flowers and siliques. Also found in leaf and stem and in low levels in cotyledons, roots and in seedlings.

Its subcellular location is the peroxisome. It carries out the reaction spermine + O2 + H2O = 3-aminopropanal + spermidine + H2O2. The enzyme catalyses N(1)-acetylspermine + O2 + H2O = 3-acetamidopropanal + spermidine + H2O2. It catalyses the reaction spermidine + O2 + H2O = 3-aminopropanal + putrescine + H2O2. It participates in amine and polyamine degradation; spermine degradation. It functions in the pathway amine and polyamine degradation; spermidine degradation. Its function is as follows. Flavoenzyme involved in polyamine back-conversion. Catalyzes the oxidation of the secondary amino group of polyamines, such as spermine, spermidine and their acetyl derivatives. Substrate preference is N(1)-acetylspermine &gt; spermine &gt; spermidine. Plays an important role in the regulation of polyamine intracellular concentration. Involved in abscisic acid-mediated developmental processes. May contribute to nitric oxide-mediated effects on root growth. The chain is Polyamine oxidase 2 from Arabidopsis thaliana (Mouse-ear cress).